A 177-amino-acid polypeptide reads, in one-letter code: Peptide methionine sulfoxide reductase MsrA 2 (177 aa).

Cysteine 12 is a catalytic residue.

It belongs to the MsrA Met sulfoxide reductase family.

The enzyme catalyses L-methionyl-[protein] + [thioredoxin]-disulfide + H2O = L-methionyl-(S)-S-oxide-[protein] + [thioredoxin]-dithiol. It catalyses the reaction [thioredoxin]-disulfide + L-methionine + H2O = L-methionine (S)-S-oxide + [thioredoxin]-dithiol. Its function is as follows. Has an important function as a repair enzyme for proteins that have been inactivated by oxidation. Catalyzes the reversible oxidation-reduction of methionine sulfoxide in proteins to methionine. This chain is Peptide methionine sulfoxide reductase MsrA 2 (msrA2), found in Staphylococcus aureus (strain NCTC 8325 / PS 47).